Here is a 577-residue protein sequence, read N- to C-terminus: External alternative NAD(P)H-ubiquinone oxidoreductase B1, mitochondrial (577 aa).

The transit peptide at 1-35 (MRGFTYLSKVLHSHSSYSKLLVLCSVSTGGLLVYA) directs the protein to the mitochondrion. 57-87 (RVVVLGTGWGGTSFLKDVDISSYDVQVVSPR) provides a ligand contact to FAD. 221–257 (LHFVIVGGGPTGVEFAAELHDYVYEDLVKIYPSVKDF) provides a ligand contact to NAD(+). Residues 378–413 (KVMEDISTIFEAADKDDSGTLSVEEFRDVLEDIIIR) enclose the EF-hand domain. Aspartate 391, aspartate 393, serine 395, threonine 397, and glutamate 402 together coordinate Ca(2+). The short motif at 568–577 (YIFGRDSSRI) is the Microbody targeting signal element.

Belongs to the NADH dehydrogenase family. FAD serves as cofactor.

Its subcellular location is the mitochondrion inner membrane. It is found in the peroxisome. The catalysed reaction is a quinone + NADH + H(+) = a quinol + NAD(+). The enzyme catalyses a ubiquinone + NADH + H(+) = a ubiquinol + NAD(+). Activity is calcium-dependent with a more pronounced effect at higher pH. Calcium-dependent NAD(P)H dehydrogenase. Binds calcium ions. Alternative NADH-ubiquinone oxidoreductase which catalyzes the oxidation of mitochondrial NADH does not translocate protons across the inner mitochondrial membrane. The sequence is that of External alternative NAD(P)H-ubiquinone oxidoreductase B1, mitochondrial (NDB1) from Solanum tuberosum (Potato).